The primary structure comprises 140 residues: uncharacterized protein (140 aa).

Belongs to the SufE family.

This is an uncharacterized protein from Rhizobium meliloti (strain 1021) (Ensifer meliloti).